The following is a 243-amino-acid chain: Vesicle-associated membrane protein-associated protein B (243 aa).

N-acetylalanine is present on Ala-2. Over 2 to 218 the chain is Cytoplasmic; the sequence is AKVEQVLSLE…PAPATPGKEE (217 aa). The MSP domain maps to 7-124; it reads VLSLEPQHEL…MDSKLRCVFE (118 aa). At Ser-146 the chain carries Phosphoserine. Lys-147 participates in a covalent cross-link: Glycyl lysine isopeptide (Lys-Gly) (interchain with G-Cter in SUMO1). Thr-150 is modified (phosphothreonine). Residues Ser-158 and Ser-159 each carry the phosphoserine modification. The stretch at 161-196 forms a coiled coil; sequence LDDTEVKKVMEECKRLQSEVQRLREENKQLKEEDGL. Basic and acidic residues predominate over residues 185 to 197; it reads EENKQLKEEDGLR. A disordered region spans residues 185 to 217; the sequence is EENKQLKEEDGLRMRKPVLSNSPAPAPATPGKE. Ser-206 carries the phosphoserine modification. A helical; Anchor for type IV membrane protein membrane pass occupies residues 219–239; sequence GLSTRLLALVVLFFIVGVIIG.

The protein belongs to the VAMP-associated protein (VAP) (TC 9.B.17) family. In terms of assembly, homodimer, and heterodimer with VAPA. Interacts with VAMP1 and VAMP2. Interacts (via MSP domain) with ZFYVE27. Interacts with RMDN3. Interacts with KIF5A in a ZFYVE27-dependent manner. Interacts (via MSP domain) with STARD3 (via phospho-FFAT motif). Interacts with STARD3NL (via FFAT motif). Interacts with CERT1. Interacts with PLEKHA3 and SACM1L to form a ternary complex. Interacts with VPS13A (via FFAT motif). Interacts with RB1CC1 (via phosphorylated FFAT motif), MIGA2 (via phosphorylated FFAT motif), RMDN3 (via phosphorylated FFAT motif), OSBPL1A (via FFAT motif), KCNB1 (via phosphorylated FFAT motif) and KCNB2 (via phosphorylated FFAT motif). Interacts (via MSP domain) with WDR44 (via FFAT motif); the interactions connect the endoplasmic reticulum (ER) with the endosomal tubule.

Its subcellular location is the endoplasmic reticulum membrane. In terms of biological role, endoplasmic reticulum (ER)-anchored protein that mediates the formation of contact sites between the ER and endosomes via interaction with FFAT motif-containing proteins such as STARD3 or WDR44. Interacts with STARD3 in a FFAT motif phosphorylation dependent manner. Via interaction with WDR44 participates in neosynthesized protein export. Participates in the endoplasmic reticulum unfolded protein response (UPR) by inducing ERN1/IRE1 activity. Involved in cellular calcium homeostasis regulation. The protein is Vesicle-associated membrane protein-associated protein B of Sus scrofa (Pig).